The sequence spans 378 residues: Succinyl-diaminopimelate desuccinylase (378 aa).

Histidine 68 provides a ligand contact to Zn(2+). Aspartate 70 is a catalytic residue. Aspartate 101 provides a ligand contact to Zn(2+). Glutamate 135 serves as the catalytic Proton acceptor. Zn(2+) is bound by residues glutamate 136, glutamate 164, and histidine 350.

The protein belongs to the peptidase M20A family. DapE subfamily. In terms of assembly, homodimer. Requires Zn(2+) as cofactor. The cofactor is Co(2+).

It carries out the reaction N-succinyl-(2S,6S)-2,6-diaminopimelate + H2O = (2S,6S)-2,6-diaminopimelate + succinate. The protein operates within amino-acid biosynthesis; L-lysine biosynthesis via DAP pathway; LL-2,6-diaminopimelate from (S)-tetrahydrodipicolinate (succinylase route): step 3/3. Functionally, catalyzes the hydrolysis of N-succinyl-L,L-diaminopimelic acid (SDAP), forming succinate and LL-2,6-diaminopimelate (DAP), an intermediate involved in the bacterial biosynthesis of lysine and meso-diaminopimelic acid, an essential component of bacterial cell walls. This Vibrio parahaemolyticus serotype O3:K6 (strain RIMD 2210633) protein is Succinyl-diaminopimelate desuccinylase.